The chain runs to 536 residues: Membrane protein insertase YidC (536 aa).

5 helical membrane-spanning segments follow: residues 3 to 23 (LQRN…WKTW), 346 to 366 (ICGN…GITF), 417 to 437 (GGCF…YMLI), 454 to 474 (LSDQ…MFFI), and 494 to 514 (IPIL…LYYL).

It belongs to the OXA1/ALB3/YidC family. Type 1 subfamily. In terms of assembly, interacts with the Sec translocase complex via SecD. Specifically interacts with transmembrane segments of nascent integral membrane proteins during membrane integration.

Its subcellular location is the cell membrane. Required for the insertion and/or proper folding and/or complex formation of integral membrane proteins into the membrane. Involved in integration of membrane proteins that insert both dependently and independently of the Sec translocase complex, as well as at least some lipoproteins. Aids folding of multispanning membrane proteins. In Buchnera aphidicola subsp. Baizongia pistaciae (strain Bp), this protein is Membrane protein insertase YidC.